We begin with the raw amino-acid sequence, 440 residues long: Adenosylhomocysteinase (440 aa).

The substrate site is built by Thr-47, Asp-123, and Glu-148. 149 to 151 (TTT) serves as a coordination point for NAD(+). Positions 178 and 182 each coordinate substrate. NAD(+) is bound by residues Asn-183, 228-233 (GFGDVG), Glu-251, 307-309 (IGH), and Asn-354.

The protein belongs to the adenosylhomocysteinase family. The cofactor is NAD(+).

The enzyme catalyses S-adenosyl-L-homocysteine + H2O = L-homocysteine + adenosine. Its pathway is amino-acid biosynthesis; L-homocysteine biosynthesis; L-homocysteine from S-adenosyl-L-homocysteine: step 1/1. In terms of biological role, adenosylhomocysteine is a competitive inhibitor of S-adenosyl-L-methionine-dependent methyl transferase reactions; therefore adenosylhomocysteinase may play a key role in the control of methylations via regulation of the intracellular concentration of adenosylhomocysteine. This Pneumocystis carinii protein is Adenosylhomocysteinase (SAHH).